The primary structure comprises 118 residues: uncharacterized protein (118 aa).

This is an uncharacterized protein from Aquifex aeolicus (strain VF5).